Here is a 174-residue protein sequence, read N- to C-terminus: Shikimate kinase 2 (174 aa).

Residue 12–17 (GAGKTT) participates in ATP binding. Mg(2+)-binding residues include Thr16 and Asp32. 3 residues coordinate substrate: Asp34, Arg58, and Gly79. Residues 112–126 (EEYPQDTQRPTLTGR) form an LID domain region. ATP is bound at residue Arg120. Arg139 serves as a coordination point for substrate.

This sequence belongs to the shikimate kinase family. AroL subfamily. In terms of assembly, monomer. Mg(2+) is required as a cofactor.

It localises to the cytoplasm. It catalyses the reaction shikimate + ATP = 3-phosphoshikimate + ADP + H(+). It functions in the pathway metabolic intermediate biosynthesis; chorismate biosynthesis; chorismate from D-erythrose 4-phosphate and phosphoenolpyruvate: step 5/7. Functionally, catalyzes the specific phosphorylation of the 3-hydroxyl group of shikimic acid using ATP as a cosubstrate. The chain is Shikimate kinase 2 from Serratia proteamaculans (strain 568).